We begin with the raw amino-acid sequence, 93 residues long: Co-chaperonin GroES (93 aa).

It belongs to the GroES chaperonin family. In terms of assembly, heptamer of 7 subunits arranged in a ring. Interacts with the chaperonin GroEL.

The protein resides in the cytoplasm. Together with the chaperonin GroEL, plays an essential role in assisting protein folding. The GroEL-GroES system forms a nano-cage that allows encapsulation of the non-native substrate proteins and provides a physical environment optimized to promote and accelerate protein folding. GroES binds to the apical surface of the GroEL ring, thereby capping the opening of the GroEL channel. The polypeptide is Co-chaperonin GroES (Lacticaseibacillus paracasei (strain ATCC 334 / BCRC 17002 / CCUG 31169 / CIP 107868 / KCTC 3260 / NRRL B-441) (Lactobacillus paracasei)).